A 906-amino-acid polypeptide reads, in one-letter code: Alanine--tRNA ligase, chloroplastic/mitochondrial (906 aa).

A compositionally biased stretch (basic and acidic residues) spans Met1–Leu10. The disordered stretch occupies residues Met1 to Asn22. The Zn(2+) site is built by His589, His593, Cys691, and His695.

Belongs to the class-II aminoacyl-tRNA synthetase family. Monomer. It depends on Zn(2+) as a cofactor.

It localises to the plastid. Its subcellular location is the chloroplast. The protein localises to the mitochondrion. It carries out the reaction tRNA(Ala) + L-alanine + ATP = L-alanyl-tRNA(Ala) + AMP + diphosphate. In terms of biological role, catalyzes the attachment of alanine to tRNA(Ala) in a two-step reaction: alanine is first activated by ATP to form Ala-AMP and then transferred to the acceptor end of tRNA(Ala). Also edits incorrectly charged tRNA(Ala) via its editing domain. This is Alanine--tRNA ligase, chloroplastic/mitochondrial from Ostreococcus lucimarinus (strain CCE9901).